We begin with the raw amino-acid sequence, 753 residues long: Lysyl oxidase homolog 3 (753 aa).

The signal sequence occupies residues 1–25; that stretch reads MRPVSVWQWSPWGLLLCLLCSSCLG. SRCR domains follow at residues 44–145 and 169–282; these read FRLA…VICK and VRIR…VSCV. 6 disulfide bridges follow: C70-C134, C83-C144, C114-C124, C201-C271, C214-C281, and C248-C258. N-linked (GlcNAc...) asparagine glycosylation is present at N111. N266 carries an N-linked (GlcNAc...) asparagine glycan. Residues 290-302 are compositionally biased toward low complexity; sequence SSGQKKQQQSKPQ. The segment at 290–315 is disordered; sequence SSGQKKQQQSKPQGEARVRLKGGAHP. 2 SRCR domains span residues 307 to 407 and 417 to 525; these read VRLK…VRCN and IRLS…VICS. 11 disulfide bridges follow: C332-C396, C345-C406, C376-C386, C446-C511, C459-C524, C492-C502, C554-C560, C606-C654, C638-C644, C666-C676, and C713-C727. 2 N-linked (GlcNAc...) asparagine glycosylation sites follow: N390 and N481. Positions 529-732 are lysyl-oxidase like; that stretch reads SDLLLHSALV…WVHNCHIGDA (204 aa). Cu cation contacts are provided by H607, H609, and H611. N-linked (GlcNAc...) asparagine glycosylation is present at N625. Positions 634–670 form a cross-link, lysine tyrosylquinone (Lys-Tyr); sequence KASFCLEDTECQEDVSKRYECANFGEQGITVGCWDLY. Y670 is subject to 2',4',5'-topaquinone.

It belongs to the lysyl oxidase family. As to quaternary structure, interacts with STAT3. Cu cation serves as cofactor. The cofactor is lysine tyrosylquinone residue. The lysine tyrosylquinone cross-link (LTQ) is generated by condensation of the epsilon-amino group of a lysine with a topaquinone produced by oxidation of tyrosine. As to expression, isoform 1: Predominantly detected in the heart, placenta, lung, and small intestine. Isoform 2: Highly detected in the kidney, pancreas, spleen, and thymus, and is absent in lung. In eye, present in all layers of corneas as well as in the limbus and conjunctiva (at protein level).

The protein resides in the secreted. It localises to the extracellular space. Its subcellular location is the cytoplasm. The protein localises to the nucleus. It carries out the reaction L-lysyl-[protein] + O2 + H2O = (S)-2-amino-6-oxohexanoyl-[protein] + H2O2 + NH4(+). The enzyme catalyses N(6)-acetyl-L-lysyl-[protein] + O2 + H2O = acetamide + (S)-2-amino-6-oxohexanoyl-[protein] + H2O2. Protein-lysine 6-oxidase that mediates the oxidation of peptidyl lysine residues to allysine in target proteins. Catalyzes the post-translational oxidative deamination of peptidyl lysine residues in precursors of elastin and different types of collagens, a prerequisite in the formation of cross-links between collagens and elastin. Required for somite boundary formation by catalyzing oxidation of fibronectin (FN1), enhancing integrin signaling in myofibers and their adhesion to the myotendinous junction (MTJ). Acts as a regulator of inflammatory response by inhibiting differentiation of naive CD4(+) T-cells into T-helper Th17 or regulatory T-cells (Treg): acts by interacting with STAT3 in the nucleus and catalyzing both deacetylation and oxidation of lysine residues on STAT3, leading to disrupt STAT3 dimerization and inhibit STAT3 transcription activity. Oxidation of lysine residues to allysine on STAT3 preferentially takes place on lysine residues that are acetylated. Also able to catalyze deacetylation of lysine residues on STAT3. In terms of biological role, shows protein-lysine 6-oxidase activity toward elastin and different types of collagens, with the highest activity toward collagen type VIII. Functionally, shows protein-lysine 6-oxidase activity toward elastin and different types of collagens, with the highest activity toward collagen type IV. In Homo sapiens (Human), this protein is Lysyl oxidase homolog 3.